Reading from the N-terminus, the 148-residue chain is Glutamyl-tRNA(Gln) amidotransferase subunit C, mitochondrial (148 aa).

The protein belongs to the GatC family. As to quaternary structure, subunit of the heterotrimeric GatCAB amidotransferase (AdT) complex, composed of A, B and C subunits.

The protein resides in the mitochondrion. The enzyme catalyses L-glutamyl-tRNA(Gln) + L-glutamine + ATP + H2O = L-glutaminyl-tRNA(Gln) + L-glutamate + ADP + phosphate + H(+). Its function is as follows. Allows the formation of correctly charged Gln-tRNA(Gln) through the transamidation of misacylated Glu-tRNA(Gln) in the mitochondria. The reaction takes place in the presence of glutamine and ATP through an activated gamma-phospho-Glu-tRNA(Gln). This is Glutamyl-tRNA(Gln) amidotransferase subunit C, mitochondrial from Drosophila pseudoobscura pseudoobscura (Fruit fly).